A 474-amino-acid chain; its full sequence is Iroquois-class homeodomain protein irx-5 (474 aa).

The homeobox; TALE-type DNA-binding region spans 109–171 (DPAYRKNASR…NARRRLKKEN (63 aa)). Disordered regions lie at residues 174-222 (TWTP…SPDG), 252-294 (ERNG…IQQL), and 453-474 (SQSQ…MSSI). Residues 182–199 (EDEDDDENIDLEKNEEDD) show a composition bias toward acidic residues. The segment covering 263–273 (PPTPPLCPPDQ) has biased composition (pro residues).

The protein belongs to the TALE/IRO homeobox family. Early in gastrulation, expressed in cells beneath the blastopore lip. Subsequently expressed in the neural plate in overlapping patterns with other irx members, which all share an anterior border of expression. At the time of neural tube closure (stage 19) in regions of the midbrain, hindbrain, neural tube and optic vesicle, where expression continues during tailbud stages. In stage 34, expressed throughout the eye retina. Does not appear to be expressed in the developing heart or pronephros.

Its subcellular location is the nucleus. In terms of biological role, acts partially redundantly with other irx members in neural patterning. Required for formation of the posterior forebrain, midbrain, hindbrain, and to a lesser extent, spinal cord. Patterns the neuroectoderm in both the anterior/posterior and dorsal/ventral axes. Does not appear to play a role in pronephros kidney development. Involved in craniofacial and gonadal development. Modulates the migration of progenitor cell populations in branchial arches and gonads by repressing CXCL12. The protein is Iroquois-class homeodomain protein irx-5 (irx5) of Xenopus laevis (African clawed frog).